Reading from the N-terminus, the 343-residue chain is MSKSSYNHIFILILCLCLRSSSAFTNLNTLSFEESLSPLFGDANLVRSPDDLSVRLLLDRYTGSGFISSNMYQHGFYSSMIKLPADYTAGVVVAFYTSNGDVFEKTHDELDIEFLGNIKGKPWRFQTNLYGNGSTHRGREERYRLWFDPSKEFHRYSILWTPHKIIFWVDDVPIREVIRNDAMGADYPAKPMALYATIWDASDWATSGGKYKANYKFAPFVAEFKSFSLDGCSVDPIQEVPMDCSDSVDFLESQDYSSINSHQRAAMRRFRQRFMYYSYCYDTLRYPEPLPECVIVPAEKDRFKETGRLKFGGTEARERRRNRRQQRRPEIEIESDPDDRKLL.

The signal sequence occupies residues 1–23 (MSKSSYNHIFILILCLCLRSSSA). The region spanning 24 to 224 (FTNLNTLSFE…YKFAPFVAEF (201 aa)) is the GH16 domain. Catalysis depends on glutamate 109, which acts as the Nucleophile. Glutamate 113 (proton donor) is an active-site residue. Xyloglucan-binding positions include glutamate 113 and 126 to 128 (QTN). A glycan (N-linked (GlcNAc...) asparagine) is linked at asparagine 132. Xyloglucan-binding positions include 136–140 (HRGRE), 203–204 (DW), glycine 208, and arginine 285. Residues cysteine 280 and cysteine 293 are joined by a disulfide bond. The segment at 306–343 (TGRLKFGGTEARERRRNRRQQRRPEIEIESDPDDRKLL) is disordered.

This sequence belongs to the glycosyl hydrolase 16 family. XTH group 3 subfamily. In terms of processing, contains at least one intrachain disulfide bond essential for its enzymatic activity. In terms of tissue distribution, predominantly expressed in green siliques.

It is found in the secreted. Its subcellular location is the cell wall. The protein resides in the extracellular space. The protein localises to the apoplast. It catalyses the reaction breaks a beta-(1-&gt;4) bond in the backbone of a xyloglucan and transfers the xyloglucanyl segment on to O-4 of the non-reducing terminal glucose residue of an acceptor, which can be a xyloglucan or an oligosaccharide of xyloglucan.. In terms of biological role, catalyzes xyloglucan endohydrolysis (XEH) and/or endotransglycosylation (XET). Cleaves and religates xyloglucan polymers, an essential constituent of the primary cell wall, and thereby participates in cell wall construction of growing tissues. The sequence is that of Probable xyloglucan endotransglucosylase/hydrolase protein 30 (XTH30) from Arabidopsis thaliana (Mouse-ear cress).